A 571-amino-acid chain; its full sequence is Cytosolic Fe-S cluster assembly factor NAR1 (571 aa).

6 residues coordinate [4Fe-4S] cluster: cysteine 20, cysteine 62, cysteine 65, cysteine 68, cysteine 204, and cysteine 259. Positions 415 to 437 (AKPSRMPGGKPIGSARRPNGKAS) are disordered. Residues cysteine 449 and cysteine 453 each coordinate [4Fe-4S] cluster.

The protein belongs to the NARF family.

Its function is as follows. Component of the cytosolic Fe/S protein assembly machinery. Required for maturation of extramitochondrial Fe/S proteins. May play a role in the transfer of pre-assembled Fe/S clusters to target apoproteins. This Sclerotinia sclerotiorum (strain ATCC 18683 / 1980 / Ss-1) (White mold) protein is Cytosolic Fe-S cluster assembly factor NAR1 (NAR1).